Here is a 261-residue protein sequence, read N- to C-terminus: HTH-type transcriptional repressor CsqR (261 aa).

The region spanning 8–63 (GNPRHDQLLMLIAERGYMNIDELANLLDVSTQTVRRDIRKLSEQGLITRHHGGAGR) is the HTH deoR-type domain. Positions 25-44 (MNIDELANLLDVSTQTVRRD) form a DNA-binding region, H-T-H motif.

In terms of assembly, monomer in the absence of DNA. Exhibits a high level of cooperativity once it is bound to its target DNA.

Inactivated in the presence of the effectors sulfoquinovose and sulfoquinovosyl glycerol, leading to the de-repression of the target genes. In terms of biological role, involved in the regulation of the sulfoquinovose operon. Represses the expression of the yihUTS operon and of the yihV and csqR genes. Binds DNA inside the spacer between the bidirectional transcription units comprising the yihUTS operon and the yihV gene, and upstream the csqR gene itself. The chain is HTH-type transcriptional repressor CsqR from Escherichia coli (strain K12).